The sequence spans 506 residues: MEEFKINLERDRSQQHDFIYPLIFQEYIYAFAHDRGLKRSIFLENAGYDNKSSLLIVKRLITHLITQIYQQNHFLFSVNDSKQNKIFGYNTHFYSQRIFEGFAIVVEIPFYLRLVSFLEDKERVKSQNLGSIHSIFPFLEDQFSHLNYVLDILIPHPIHLEILVQTLRYWVKDASSLHLLRFFLYDYPILNSLIIPKKSSFSISKINQRFFLFLYNFHVWEYESIFVFLRTQSSHLRLISSETFLERISFYQKIELEVFTNEFKAILWDFKEPFMHYVRYRGKAILASKGTSLLMNKWKYYLVNFWQCYFYMWSQPKRICINQLSNHSLDFMSYLSSVRLQLLMVRSKMIENSFLIENASKKFDTLMPITPMIGYLSKAKFCNVLGHPVSKPVWADLSDSDIIDRFGRIYRNISHYHSGSLKKTSLYRIKYILRLSCARTLARKHKSTVRAFLKRLGVGLLEEFFTEEEQVFYLTFPKVSSTSGKLYRRKIWYLDIICINDLANYE.

Belongs to the intron maturase 2 family. MatK subfamily.

The protein resides in the plastid. It is found in the chloroplast. Functionally, usually encoded in the trnK tRNA gene intron. Probably assists in splicing its own and other chloroplast group II introns. The protein is Maturase K of Calluna vulgaris (Heather).